The primary structure comprises 336 residues: Serpentine receptor class alpha-10 (336 aa).

The Extracellular portion of the chain corresponds to 1 to 28 (MGPITANSSKCATEDQMILQTSLLLRIN). The chain crosses the membrane as a helical span at residues 29–49 (VIIMTIVAIITFILTYKALFI). Residues 50-61 (LKIRPIFHSSTK) lie on the Cytoplasmic side of the membrane. Residues 62-82 (ILLYTSLLFVNVHAVIFMVIQ) form a helical membrane-spanning segment. At 83-107 (NTALIRSFTLSDKPCEIMRTTLECR) the chain is on the extracellular side. Residues 108-128 (FQNHVLIFGIAGVNFNQFGLT) traverse the membrane as a helical segment. Topologically, residues 129–148 (VDRLLATIIPQSYSHMGALP) are cytoplasmic. The helical transmembrane segment at 149–169 (GVILSVLVVACSIAAPLIIAI) threads the bilayer. The Extracellular segment spans residues 170-192 (GDPYDDIVPNCFFFPEHSAPRAN). A helical membrane pass occupies residues 193-213 (IFLVTLSTLVITSIFLNFIII). Residues 214-243 (YANKKLEKGCRTRFYVTQRYQKREALISTR) are Cytoplasmic-facing. A helical transmembrane segment spans residues 244-264 (IISYIAASQFLGLTLYSTMVL). At 265 to 280 (TLRLHKSMIPISIYHN) the chain is on the extracellular side. A helical transmembrane segment spans residues 281–301 (MVWWAYTVPFAAVSLPALLIY). Topologically, residues 302 to 336 (RINQVGSNRKRVINRITAKVETQEEHMKSLKELWA) are cytoplasmic.

Belongs to the nematode receptor-like protein sra family. As to expression, expressed in the URX sensory neuron, the ALA interneuron and in additional interneurons, pharyngeal neurons and muscle.

The protein resides in the membrane. In Caenorhabditis elegans, this protein is Serpentine receptor class alpha-10 (sra-10).